A 275-amino-acid chain; its full sequence is MNLEEKKVFLKKNKKIKEFFIADDVKISSFRNEIMSMEHPIFSLKGGDTRIRIYEYGNVIIKIKPTADGIANIFDKDIWIYSISKLQSEINKNNSKISKAICFTPYDFFISTKRNKSGRSYEELRKALSRLKGTIIETNIFYSKNKKKSLSFGLIDSWKILEEKKGKLNIGMIEIILPEWLYVALKNKRILKISEDYFKIRKSIDRRIYEIARKHCGNQKFFKISTKKLYLKTGSTSLLKMFKHNLKRLVRKNNLPDYNIRYNLYKDIITFSKRF.

Residues 98–198 (SKAICFTPYD…RILKISEDYF (101 aa)) form the BRCT domain.

This chain is Putative replication protein, found in Wigglesworthia glossinidia brevipalpis.